The following is a 261-amino-acid chain: MDWGTLHTFIGGVNKHSTSIGKVWITVIFIFRVMILVVAAQEVWGDEQEDFVCNTLQPGCKNVCYDHFFPVSHIRLWALQLIFVSTPALLVAMHVAYYRHETTRKFRRGEKRNDFKDIEDIKKQKVRIEGSLWWTYTSSIFFRIIFEAAFMYVFYFLYNGYHLPWVLKCGIDPCPNLVDCFISRPTEKTVFTIFMISASVICMLLNVAELCYLLLKVCFRRSKRAQTQKNHPNHALKESKQNEMNELISDSGQNAITGFPS.

The Cytoplasmic portion of the chain corresponds to 1–22 (MDWGTLHTFIGGVNKHSTSIGK). A helical transmembrane segment spans residues 23 to 45 (VWITVIFIFRVMILVVAAQEVWG). Residues 46-75 (DEQEDFVCNTLQPGCKNVCYDHFFPVSHIR) are Extracellular-facing. Residues 76 to 98 (LWALQLIFVSTPALLVAMHVAYY) form a helical membrane-spanning segment. The Cytoplasmic portion of the chain corresponds to 99–131 (RHETTRKFRRGEKRNDFKDIEDIKKQKVRIEGS). A helical transmembrane segment spans residues 132-154 (LWWTYTSSIFFRIIFEAAFMYVF). Residues 155–192 (YFLYNGYHLPWVLKCGIDPCPNLVDCFISRPTEKTVFT) are Extracellular-facing. Residues 193 to 215 (IFMISASVICMLLNVAELCYLLL) form a helical membrane-spanning segment. The Cytoplasmic portion of the chain corresponds to 216–261 (KVCFRRSKRAQTQKNHPNHALKESKQNEMNELISDSGQNAITGFPS).

Belongs to the connexin family. Beta-type (group I) subfamily. A connexon is composed of a hexamer of connexins. Interacts with CNST.

It localises to the cell membrane. Its subcellular location is the cell junction. It is found in the gap junction. Its function is as follows. One gap junction consists of a cluster of closely packed pairs of transmembrane channels, the connexons, through which materials of low MW diffuse from one cell to a neighboring cell. This is Gap junction beta-6 protein (GJB6) from Homo sapiens (Human).